The sequence spans 167 residues: Probable host range protein 2 (167 aa).

Belongs to the poxviridae C7 protein family.

Functionally, plays a role for multiplication of the virus in different cell types. This chain is Probable host range protein 2, found in Yaba monkey tumor virus (strain VR587) (YMTV).